The sequence spans 295 residues: Virginiamycin B lyase (295 aa).

Substrate is bound at residue His-228. Residue Glu-268 participates in Mg(2+) binding. Residue His-270 is the Proton acceptor of the active site. Residue Glu-285 participates in Mg(2+) binding.

The protein belongs to the Vgb family. Monomer. It depends on Mg(2+) as a cofactor.

Functionally, inactivates the type B streptogramin antibiotics by linearizing the lactone ring at the ester linkage, generating a free phenylglycine carboxylate and converting the threonyl moiety into 2-amino-butenoic acid. In Clostridium beijerinckii (strain ATCC 51743 / NCIMB 8052) (Clostridium acetobutylicum), this protein is Virginiamycin B lyase.